The chain runs to 110 residues: N(4)-acetylcytidine amidohydrolase (110 aa).

The region spanning 6–93 (TFFERFEQDI…IQEIYPGLEQ (88 aa)) is the ASCH domain. Catalysis depends on Lys20, which acts as the Proton acceptor. The active-site Nucleophile is the Thr23. Catalysis depends on Glu73, which acts as the Proton donor.

The protein belongs to the N(4)-acetylcytidine amidohydrolase family.

It catalyses the reaction N(4)-acetylcytidine + H2O = cytidine + acetate + H(+). It carries out the reaction N(4)-acetyl-2'-deoxycytidine + H2O = 2'-deoxycytidine + acetate + H(+). The catalysed reaction is N(4)-acetylcytosine + H2O = cytosine + acetate + H(+). In terms of biological role, catalyzes the hydrolysis of N(4)-acetylcytidine (ac4C). The chain is N(4)-acetylcytidine amidohydrolase from Shewanella sp. (strain ANA-3).